The following is an 840-amino-acid chain: V-type proton ATPase 116 kDa subunit a 4 (840 aa).

At 1-390 the chain is on the cytoplasmic side; it reads MVSVFRSEEM…DAYGVGSYRE (390 aa). A helical membrane pass occupies residues 391 to 409; the sequence is INPAPYTIITFPFLFAVMF. The Vacuolar segment spans residues 410 to 411; sequence GD. The helical transmembrane segment at 412–428 threads the bilayer; it reads CGHGTVMLLAALWMILN. Residues 429 to 443 lie on the Cytoplasmic side of the membrane; the sequence is ERRLLSQKTDNEIWN. Residues 444 to 473 form a helical membrane-spanning segment; it reads TFFHGRYLILLMGIFSIYTGLIYNDCFSKS. Residues 474-538 are Vacuolar-facing; sequence LNIFGSSWSV…ASNKLTFLNS (65 aa). The helical transmembrane segment at 539 to 558 threads the bilayer; it reads YKMKMSVILGIVQMVFGVIL. The Cytoplasmic portion of the chain corresponds to 559–576; sequence SLFNHIYFRRTLNIILQF. A helical membrane pass occupies residues 577–597; sequence IPEMIFILCLFGYLVFMIIFK. The Vacuolar segment spans residues 598-642; it reads WCCFDVHVSQHAPSILIHFINMFLFNYSDSSNAPLYKHQQEVQSF. The helical transmembrane segment at 643-662 threads the bilayer; the sequence is FVVMALISVPWMLLIKPFIL. At 663–727 the chain is on the cytoplasmic side; it reads RASHRKSQLQ…DVFVHQAIHT (65 aa). The interval 675–704 is disordered; sequence RIQEDATENIEGDSSSPSSRSGQRTSADTH. A helical transmembrane segment spans residues 728–752; it reads IEYCLGCISNTASYLRLWALSLAHA. Over 753-773 the chain is Vacuolar; sequence QLSEVLWTMVMNSGLQTRGWG. A helical transmembrane segment spans residues 774-812; it reads GIVGVFIIFAVFAVLTVAILLIMEGLSAFLHALRLHWVE. At 813–840 the chain is on the cytoplasmic side; it reads FQNKFYVGDGYKFSPFSFKHILDGTAEE.

This sequence belongs to the V-ATPase 116 kDa subunit family. As to quaternary structure, V-ATPase is a heteromultimeric enzyme made up of two complexes: the ATP-hydrolytic V1 complex and the proton translocation V0 complex. The V1 complex consists of three catalytic AB heterodimers that form a heterohexamer, three peripheral stalks each consisting of EG heterodimers, one central rotor including subunits D and F, and the regulatory subunits C and H. The proton translocation complex V0 consists of the proton transport subunit a, a ring of proteolipid subunits c9c'', rotary subunit d, subunits e and f, and the accessory subunits ATP6AP1/Ac45 and ATP6AP2/PRR. Interacts with the V1 complex V-ATPase subunit A ATP6V1A. Interacts with the V0 complex V-ATPase subunit c ATP6V0C. In terms of tissue distribution, expressed in adult and fetal kidney. Found in the inner ear.

Its subcellular location is the apical cell membrane. It localises to the basolateral cell membrane. Functionally, subunit of the V0 complex of vacuolar(H+)-ATPase (V-ATPase), a multisubunit enzyme composed of a peripheral complex (V1) that hydrolyzes ATP and a membrane integral complex (V0) that translocates protons. V-ATPase is responsible for acidifying and maintaining the pH of intracellular compartments and in some cell types, is targeted to the plasma membrane, where it is responsible for acidifying the extracellular environment. Involved in normal vectorial acid transport into the urine by the kidney. The chain is V-type proton ATPase 116 kDa subunit a 4 (ATP6V0A4) from Homo sapiens (Human).